The chain runs to 957 residues: Plasma membrane ATPase 1 (957 aa).

Over 1-66 the chain is Cytoplasmic; that stretch reads MGEEKPEVLD…EKKDSKLLKF (66 aa). Residues 67–86 traverse the membrane as a helical segment; sequence LGFMWNPLSWVMEAAAIMAI. The Extracellular portion of the chain corresponds to 87–98; sequence ALANGGGKPPDW. A helical transmembrane segment spans residues 99 to 119; sequence QDFVGIITLLIINSTISFIEE. At 120–248 the chain is on the cytoplasmic side; that stretch reads NNAGNAAAAL…GHFQKVLTAI (129 aa). Residues 249-269 traverse the membrane as a helical segment; sequence GNFCICSIAVGMIIEIIVMYP. Topologically, residues 270–279 are extracellular; the sequence is IQHRAYRPGI. A helical transmembrane segment spans residues 280–301; that stretch reads DNLLVLLIGGIPIAMPTVLSVT. At 302-648 the chain is on the cytoplasmic side; the sequence is MAIGSHRLAQ…TSRAIFQRMK (347 aa). Catalysis depends on Asp-334, which acts as the 4-aspartylphosphate intermediate. Residues Asp-593 and Asp-597 each contribute to the Mg(2+) site. The chain crosses the membrane as a helical span at residues 649–670; sequence NYTIYAVSITIRIVLGFMLLAL. At 671–675 the chain is on the extracellular side; that stretch reads IWKFD. A helical membrane pass occupies residues 676-698; it reads FPPFMVLIIAILNDGTIMTISKD. The Cytoplasmic portion of the chain corresponds to 699–714; that stretch reads RVKPSPLPDSWKLAEI. A helical membrane pass occupies residues 715–735; sequence FTTGIVLGGYLAMMTVIFFWA. Residues 736–760 lie on the Extracellular side of the membrane; sequence AYKTNFFPHVFGVSTLEKTATDDFR. A helical membrane pass occupies residues 761–781; the sequence is KLASAIYLQVSIISQALIFVT. At 782–793 the chain is on the cytoplasmic side; the sequence is RSRSWSFVERPG. A helical transmembrane segment spans residues 794 to 814; the sequence is FLLVIAFVIAQLVATLIAVYA. The Extracellular portion of the chain corresponds to 815–823; it reads NWSFAAIEG. A helical membrane pass occupies residues 824–844; sequence IGWGWAGVIWIYNLVFYIPLD. Topologically, residues 845–957 are cytoplasmic; it reads IIKFFIRYAL…IETIQQAYTV (113 aa).

Belongs to the cation transport ATPase (P-type) (TC 3.A.3) family. Type IIIA subfamily. In terms of tissue distribution, expressed in roots, stems, leaves from both vegetative and flowering plants, and flowers at early and late stages of development with highest expression levels found in flowers and stem.

The protein resides in the cell membrane. The enzyme catalyses ATP + H2O + H(+)(in) = ADP + phosphate + 2 H(+)(out). Functionally, the plasma membrane ATPase of plants and fungi is a hydrogen ion pump. The proton gradient it generates drives the active transport of nutrients by H(+)-symport. The resulting external acidification and/or internal alkinization may mediate growth responses. This is Plasma membrane ATPase 1 (PMA1) from Nicotiana plumbaginifolia (Leadwort-leaved tobacco).